A 2998-amino-acid chain; its full sequence is Probable polyketide synthase 14 (2998 aa).

Residues 19–456 (EDDIAIIGIG…GSNCCLILSE (438 aa)) form the Ketosynthase family 3 (KS3) domain. Active-site for beta-ketoacyl synthase activity residues include C189, H331, and H376. Positions 657-690 (GIEASFIVGHSLGEIPAAYCSGMITLDTLCYLIY) are acyl/malonyl transferase. Residue S667 is the For acyl/malonyl transferase activity of the active site. The N-terminal hotdog fold stretch occupies residues 962-1084 (IDQLGFSLIE…GNFQLFTSGN (123 aa)). The PKS/mFAS DH domain occupies 962-1249 (IDQLGFSLIE…CKSLTIIKDS (288 aa)). Catalysis depends on H996, which acts as the Proton acceptor; for dehydratase activity. Residues 1101–1249 (NLTKLTKNEL…CKSLTIIKDS (149 aa)) are C-terminal hotdog fold. The active-site Proton donor; for dehydratase activity is the D1159. A helical membrane pass occupies residues 1979-1999 (SILIHSGSGGIGLSALNILKW). Residues 2476 to 2553 (ENDTSIDSLF…SSIKLITNQL (78 aa)) form the Carrier domain. At S2513 the chain carries O-(pantetheine 4'-phosphoryl)serine. A disordered region spans residues 2559 to 2578 (DGQQQQHRQNKKNNNIPENK). Residues 2561–2573 (QQQQHRQNKKNNN) show a composition bias toward low complexity. The chain crosses the membrane as a helical span at residues 2621-2641 (IFLTGSTGFLGAYLLWYLIQM).

Pantetheine 4'-phosphate is required as a cofactor.

The protein localises to the membrane. In terms of biological role, probable polyketide synthase. The chain is Probable polyketide synthase 14 (pks14) from Dictyostelium discoideum (Social amoeba).